The chain runs to 451 residues: UPF0210 protein Cbei_2352 (451 aa).

Belongs to the UPF0210 family. As to quaternary structure, homodimer.

The protein is UPF0210 protein Cbei_2352 of Clostridium beijerinckii (strain ATCC 51743 / NCIMB 8052) (Clostridium acetobutylicum).